A 250-amino-acid polypeptide reads, in one-letter code: 1-(5-phosphoribosyl)-5-[(5-phosphoribosylamino)methylideneamino] imidazole-4-carboxamide isomerase (250 aa).

The active-site Proton acceptor is D8. The active-site Proton donor is the D131.

This sequence belongs to the HisA/HisF family.

Its subcellular location is the cytoplasm. It carries out the reaction 1-(5-phospho-beta-D-ribosyl)-5-[(5-phospho-beta-D-ribosylamino)methylideneamino]imidazole-4-carboxamide = 5-[(5-phospho-1-deoxy-D-ribulos-1-ylimino)methylamino]-1-(5-phospho-beta-D-ribosyl)imidazole-4-carboxamide. It participates in amino-acid biosynthesis; L-histidine biosynthesis; L-histidine from 5-phospho-alpha-D-ribose 1-diphosphate: step 4/9. The sequence is that of 1-(5-phosphoribosyl)-5-[(5-phosphoribosylamino)methylideneamino] imidazole-4-carboxamide isomerase from Paraburkholderia xenovorans (strain LB400).